The sequence spans 175 residues: Peptide deformylase (175 aa).

Positions 94 and 136 each coordinate Fe cation. Glutamate 137 is a catalytic residue. Residue histidine 140 coordinates Fe cation.

This sequence belongs to the polypeptide deformylase family. Requires Fe(2+) as cofactor.

The catalysed reaction is N-terminal N-formyl-L-methionyl-[peptide] + H2O = N-terminal L-methionyl-[peptide] + formate. Functionally, removes the formyl group from the N-terminal Met of newly synthesized proteins. Requires at least a dipeptide for an efficient rate of reaction. N-terminal L-methionine is a prerequisite for activity but the enzyme has broad specificity at other positions. The sequence is that of Peptide deformylase from Brucella suis biovar 1 (strain 1330).